Reading from the N-terminus, the 232-residue chain is Probable phospholipid hydroperoxide glutathione peroxidase 6, mitochondrial (232 aa).

The transit peptide at 1 to 54 (MLRSSIRLLYIRRTSPLLRSLSSSSSSSSSKRFDSAKPLFNSHRIISLPISTTG) directs the protein to the mitochondrion. Residue Cys105 is part of the active site.

It belongs to the glutathione peroxidase family. In terms of tissue distribution, expressed at a low but detectable level in leaves, stems, and flowers, but at a higher level in siliques and even higher in roots. Predominantly expressed in seeds.

It is found in the mitochondrion. The enzyme catalyses a hydroperoxy polyunsaturated fatty acid + 2 glutathione = a hydroxy polyunsaturated fatty acid + glutathione disulfide + H2O. Functionally, protects cells and enzymes from oxidative damage, by catalyzing the reduction of hydrogen peroxide, lipid peroxides and organic hydroperoxide, by glutathione. This Arabidopsis thaliana (Mouse-ear cress) protein is Probable phospholipid hydroperoxide glutathione peroxidase 6, mitochondrial (GPX6).